A 179-amino-acid polypeptide reads, in one-letter code: MIIKNEWLIVGFITSCHGINGQLKVKSLSDFEERFLKPGMRWLQKESEHPSKIELISGFKQPGKEIFIVKFKGINTRNHAEQLKKCKLLVKSDKLPKLKKEEFHLLELIDLEVKTLENDELKIIGKVINLENEKNNLLIIELFKNQKKVLIPFVKEIVPLVDIKNNFLIINPPNGLLEL.

In terms of domain architecture, PRC barrel spans 100–176 (KEEFHLLELI…FLIINPPNGL (77 aa)).

It belongs to the RimM family. In terms of assembly, binds ribosomal protein uS19.

The protein resides in the cytoplasm. Its function is as follows. An accessory protein needed during the final step in the assembly of 30S ribosomal subunit, possibly for assembly of the head region. Essential for efficient processing of 16S rRNA. May be needed both before and after RbfA during the maturation of 16S rRNA. It has affinity for free ribosomal 30S subunits but not for 70S ribosomes. In Prochlorococcus marinus (strain AS9601), this protein is Ribosome maturation factor RimM.